Consider the following 482-residue polypeptide: Reduced viability upon starvation protein 167 (482 aa).

Ser2 bears the N-acetylserine mark. One can recognise a BAR domain in the interval 17–254 (FRQKFKMGEQ…YFDLNSDIVE (238 aa)). Coiled coils occupy residues 31 to 64 (VYED…NGML) and 174 to 204 (AKDE…LKTQ). A Glycyl lysine isopeptide (Lys-Gly) (interchain with G-Cter in ubiquitin) cross-link involves residue Lys242. 3 positions are modified to phosphoserine; by FUS3 and PHO85: Ser299, Ser321, and Ser379. Positions 382–407 (LTGLGFQQSPQQQQGPPPAYSNPLTS) are disordered. The SH3 domain maps to 421-482 (PGVETVTALY…PGNYVQLNKN (62 aa)). Lys481 is covalently cross-linked (Glycyl lysine isopeptide (Lys-Gly) (interchain with G-Cter in ubiquitin)).

In terms of assembly, binds to actin. Interacts with ABP1, GYL1, GYP5, PCL2 and YBR108W. Phosphorylated redundantly by cyclin-dependent kinase PHO85 in association with PCL1,2-type cyclins or by MAP kinase FUS3. Phosphorylation inhibits interaction with complexes involved in actin cytoskeleton function.

It is found in the cytoplasm. The protein resides in the cytoskeleton. Its function is as follows. Component of a cytoskeletal structure that is required for the formation of endocytic vesicles at the plasma membrane level. Could be implicated in cytoskeletal reorganization in response to environmental stresses and could act in the budding site selection mechanism. The polypeptide is Reduced viability upon starvation protein 167 (RVS167) (Saccharomyces cerevisiae (strain ATCC 204508 / S288c) (Baker's yeast)).